The sequence spans 243 residues: Carboxy-S-adenosyl-L-methionine synthase (243 aa).

Residues Tyr-40, 65-67 (GCS), 90-91 (DN), 118-119 (DI), Asn-133, and Arg-200 each bind S-adenosyl-L-methionine.

This sequence belongs to the class I-like SAM-binding methyltransferase superfamily. Cx-SAM synthase family. In terms of assembly, homodimer.

The catalysed reaction is prephenate + S-adenosyl-L-methionine = carboxy-S-adenosyl-L-methionine + 3-phenylpyruvate + H2O. Its function is as follows. Catalyzes the conversion of S-adenosyl-L-methionine (SAM) to carboxy-S-adenosyl-L-methionine (Cx-SAM). The sequence is that of Carboxy-S-adenosyl-L-methionine synthase from Shewanella baltica (strain OS223).